Reading from the N-terminus, the 76-residue chain is uncharacterized protein (76 aa).

Positions 6-60 (LKKNRLEKGFTQEEVAKAAQIGRAYYTMIENGTRKPSVIVSKKIGEKLGFDWTIF) constitute an HTH cro/C1-type domain. Residues 17–36 (QEEVAKAAQIGRAYYTMIEN) constitute a DNA-binding region (H-T-H motif).

This is an uncharacterized protein from Bacillus subtilis (strain 168).